A 261-amino-acid polypeptide reads, in one-letter code: Proliferating cell nuclear antigen (261 aa).

Positions 7 to 100 (VQGSILKKVL…RAEDNADTLA (94 aa)) are interaction with NUDT15. N6-acetyllysine is present on residues lysine 14, lysine 77, and lysine 80. A DNA-binding region spans residues 61–80 (RCDRNLAMGVNLTSMSKILK). An intrachain disulfide couples cysteine 135 to cysteine 162. Lysine 164 is covalently cross-linked (Glycyl lysine isopeptide (Lys-Gly) (interchain with G-Cter in SUMO2); alternate). Residue lysine 164 forms a Glycyl lysine isopeptide (Lys-Gly) (interchain with G-Cter in ubiquitin); alternate linkage. The residue at position 211 (tyrosine 211) is a Phosphotyrosine; by EGFR. Lysine 248 bears the N6-acetyllysine mark. Lysine 254 is covalently cross-linked (Glycyl lysine isopeptide (Lys-Gly) (interchain with G-Cter in SUMO2)).

It belongs to the PCNA family. As to quaternary structure, homotrimer. Interacts with p300/EP300; the interaction occurs on chromatin in UV-irradiated damaged cells. Interacts with CREBBP (via transactivation domain and C-terminus); the interaction occurs on chromatin in UV-irradiated damaged cells. Directly interacts with POLD1, POLD3 and POLD4 subunits of the DNA polymerase delta complex, POLD3 being the major interacting partner; the interaction with POLD3 is inhibited by CDKN1A/p21(CIP1). Forms a complex with activator 1 heteropentamer in the presence of ATP. Interacts with EXO1, POLH, POLK, DNMT1, ERCC5, FEN1, CDC6 and POLDIP2. Interacts with POLB. Interacts with APEX2; this interaction is triggered by reactive oxygen species and increased by misincorporation of uracil in nuclear DNA. Forms a ternary complex with DNTTIP2 and core histone. Interacts with KCTD10 and PPP1R15A. Interacts with SMARCA5/SNF2H. Interacts with BAZ1B/WSTF; the interaction is direct and is required for BAZ1B/WSTF binding to replication foci during S phase. Interacts with HLTF and SHPRH. Interacts with NUDT15; this interaction is disrupted in response to UV irradiation and acetylation. Interacts with CDKN1A/p21(CIP1) and CDT1; interacts via their PIP-box which also recruits the DCX(DTL) complex. The interaction with CDKN1A inhibits POLD3 binding. Interacts with DDX11. Interacts with EGFR; positively regulates PCNA. Interacts with PARPBP. Interacts (when ubiquitinated) with SPRTN; leading to enhance RAD18-mediated PCNA ubiquitination. Interacts (when polyubiquitinated) with ZRANB3. Interacts with SMARCAD1. Interacts with CDKN1C. Interacts with PCLAF (via PIP-box). Interacts with RTEL1 (via PIP-box); the interaction is direct and essential for the suppression of telomere fragility. Interacts with FAM111A (via PIP-box); the interaction is direct and required for PCNA loading on chromatin binding. Interacts with LIG1. Interacts with SETMAR. Interacts with ANKRD17. Interacts with FBXO18/FBH1 (via PIP-box); the interaction recruits the DCX(DTL) complex and promotes ubiquitination and degradation of FBXO18/FBH1. Interacts with POLN. Interacts with SDE2 (via PIP-box); the interaction is direct and prevents ultraviolet light induced monoubiquitination. Component of the replisome complex composed of at least DONSON, MCM2, MCM7, PCNA and TICRR; interaction at least with PCNA occurs during DNA replication. Interacts with MAPK15; the interaction is chromatin binding dependent and prevents MDM2-mediated PCNA destruction by inhibiting the association of PCNA with MDM2. Interacts with PARP10 (via PIP-box). Interacts with DDI2. Interacts with HMCES (via PIP-box). Interacts with TRAIP (via PIP-box). Interacts with UHRF2. Interacts with ALKBH2; this interaction is enhanced during the S-phase of the cell cycle. Interacts with ATAD5; the interaction promotes USP1-mediated PCNA deubiquitination. Interacts with DNA damage up-regulated protein DDUP. Interacts (when phosphorylated) with GRB2. Interacts with ANG. Interacts with nuclear UNG (isoform 2); this interaction mediates UNG recruitment to S-phase replication foci. Interacts with ERCC6L2 (via an atypical PIP-box); this interaction facilitates cenrtomeric localization of ERCC6L2. (Microbial infection) Interacts with herpes virus 8 protein LANA1. Phosphorylated. Phosphorylation at Tyr-211 by EGFR stabilizes chromatin-associated PCNA. Post-translationally, acetylated by CREBBP and p300/EP300; preferentially acetylated by CREBBP on Lys-80, Lys-13 and Lys-14 and on Lys-77 by p300/EP300 upon loading on chromatin in response to UV irradiation. Lysine acetylation disrupts association with chromatin, hence promoting PCNA ubiquitination and proteasomal degradation in response to UV damage in a CREBBP- and EP300-dependent manner. Acetylation disrupts interaction with NUDT15 and promotes degradation. In terms of processing, ubiquitinated. Following DNA damage, can be either monoubiquitinated to stimulate direct bypass of DNA lesions by specialized DNA polymerases or polyubiquitinated to promote recombination-dependent DNA synthesis across DNA lesions by template switching mechanisms. Following induction of replication stress, monoubiquitinated by the UBE2B-RAD18 complex on Lys-164, leading to recruit translesion (TLS) polymerases, which are able to synthesize across DNA lesions in a potentially error-prone manner. An error-free pathway also exists and requires non-canonical polyubiquitination on Lys-164 through 'Lys-63' linkage of ubiquitin moieties by the E2 complex UBE2N-UBE2V2 and the E3 ligases, HLTF, RNF8 and SHPRH. This error-free pathway, also known as template switching, employs recombination mechanisms to synthesize across the lesion, using as a template the undamaged, newly synthesized strand of the sister chromatid. Monoubiquitination at Lys-164 also takes place in undamaged proliferating cells, and is mediated by the DCX(DTL) complex, leading to enhance PCNA-dependent translesion DNA synthesis. Sumoylated during S phase. Methylated on glutamate residues by ARMT1/C6orf211.

It is found in the nucleus. In terms of biological role, auxiliary protein of DNA polymerase delta and epsilon, is involved in the control of eukaryotic DNA replication by increasing the polymerase's processibility during elongation of the leading strand. Induces a robust stimulatory effect on the 3'-5' exonuclease and 3'-phosphodiesterase, but not apurinic-apyrimidinic (AP) endonuclease, APEX2 activities. Has to be loaded onto DNA in order to be able to stimulate APEX2. Plays a key role in DNA damage response (DDR) by being conveniently positioned at the replication fork to coordinate DNA replication with DNA repair and DNA damage tolerance pathways. Acts as a loading platform to recruit DDR proteins that allow completion of DNA replication after DNA damage and promote postreplication repair: Monoubiquitinated PCNA leads to recruitment of translesion (TLS) polymerases, while 'Lys-63'-linked polyubiquitination of PCNA is involved in error-free pathway and employs recombination mechanisms to synthesize across the lesion. This Homo sapiens (Human) protein is Proliferating cell nuclear antigen (PCNA).